The primary structure comprises 199 residues: MADTSKDIEELIGIMARLPGLGPRSARRAVLTLIKKRGALMRPLAETMARVAESARECVNCGNIGTGDLCEICMDVRRATGEICVVEDVADLWAMERGQAFKGRYHVLGGTLSALDDVGPEDLRIPKLRARMADEGITEVILALNATVDGQTTAHYIADELAPTGVTLSSLAQGVPIGGELDYLDDGTISAALRARKSL.

The C4-type zinc-finger motif lies at cysteine 58 to cysteine 73. In terms of domain architecture, Toprim spans glycine 81–proline 176.

It belongs to the RecR family.

May play a role in DNA repair. It seems to be involved in an RecBC-independent recombinational process of DNA repair. It may act with RecF and RecO. The polypeptide is Recombination protein RecR (Jannaschia sp. (strain CCS1)).